The primary structure comprises 194 residues: 2,4-dinitrotoluene dioxygenase system, small oxygenase component (194 aa).

The protein belongs to the bacterial ring-hydroxylating dioxygenase beta subunit family. As to quaternary structure, the 2,4-dinitrotoluene dioxygenase (DNTDO) multicomponent enzyme system is composed of an electron transfer component and a dioxygenase component (iron sulfur protein (ISP)). The electron transfer component is composed of a ferredoxin reductase (DntAa) and a ferredoxin (DntAb), and the dioxygenase component is formed of a large alpha subunit (DntAc) and a small beta subunit (DntAd).

Its function is as follows. Component of the 2,4-dinitrotoluene dioxygenase (DNTDO) multicomponent enzyme system which catalyzes the incorporation of both atoms of molecular oxygen into 2,4-dinitrotoluene (DNT) to form 4-methyl-5-nitrocatechol (MNC) and nitrite. The beta subunit seems to have a structural role in the holoenzyme. Also able to convert naphthalene to cis-(1R,2S)-dihydroxy-1,2-dihydronaphthalene. This chain is 2,4-dinitrotoluene dioxygenase system, small oxygenase component, found in Burkholderia sp. (strain RASC).